The primary structure comprises 109 residues: uncharacterized protein (109 aa).

The protein resides in the mitochondrion. This is an uncharacterized protein from Saccharomyces cerevisiae (strain ATCC 204508 / S288c) (Baker's yeast).